A 495-amino-acid chain; its full sequence is Cornulin (495 aa).

One can recognise an EF-hand domain in the interval 49–84 (HDPATVDEVLRLLDEDHTGTVEFKEFLVLVFKVAQA). 5 residues coordinate Ca(2+): aspartate 62, aspartate 64, threonine 66, threonine 68, and glutamate 73. 2 disordered regions span residues 96 to 439 (ACGS…TVVG) and 460 to 481 (LHTS…KRGI). The segment covering 99-110 (SQESGSLHSGAS) has biased composition (polar residues). Residues 137-151 (HRQSQQGSRGQNRPG) show a composition bias toward low complexity. Residues 152–194 (VQTQGQATGSAWVSSYDRQAESQSQERISPQIQLSGQTEQTQK) show a composition bias toward polar residues. Residues 196-222 (GEGKRNQTTEMRPERQPQTREQDRAHQ) show a composition bias toward basic and acidic residues. Positions 226–242 (TVTGSGTQTQAGATQTV) are enriched in low complexity. Polar residues-rich tracts occupy residues 243–282 (EQDS…SQAV) and 290–303 (QAGT…QTVE). Low complexity predominate over residues 307 to 324 (SHQTGSTSTQTQESTNGQ). The span at 334 to 355 (GRSQTSQAVTGGHTQIQAGSHT) shows a compositional bias: polar residues. The segment covering 374 to 385 (QGQTQTQPGSGQ) has biased composition (low complexity). Polar residues-rich tracts occupy residues 403-420 (QAQT…WSST) and 460-473 (LHTS…QDAA).

This sequence belongs to the S100-fused protein family. In terms of assembly, homodimer. Expressed in the basal skin layer (at protein level). Squamous epithelia cell-specific. Expressed in the esophagus (periphery of the cells of the granular and the upper spinous layers), foreskin (granular and lower cornified cells), scalp skin (granular layer), inner root sheath of the hair follicle and in primary keratinocytes (at protein level). Expressed in the squamous epithelium of the cervix, esophagus, foreskin and larynx. Expressed in the fetal bladder and scalp skin. Expressed at very low levels in the lung, kidney, uterus, skeletal muscle, heart and fetal brain. Undetectable or barely detectable in esophageal and oral squamous cell carcinoma compared with the matched adjacent normal esophageal mucosa. Undetectable or barely detectable in larynx and esophagus from patients with pH-documented laryngopharyngeal reflux (LPR).

The protein resides in the cytoplasm. Functionally, promotes cell proliferation, G1/S cell cycle progression and induces expression of the cell cycle regulator CCND1. Regulates proliferation induced by pro-inflammatory cytokine response via activation of NFKB1 and PI3K/AKT signaling pathways. The polypeptide is Cornulin (CRNN) (Homo sapiens (Human)).